The following is a 201-amino-acid chain: MAKKFTQHRGIVLPLDAANVDTDAIIPKQFLQMVTRTGFGRNLFYDWRYLDAEGQLANPDFVLNKPEFSGASIMLTRENFGCGSSREHAPWALTDYGIQAIIGSGFADIFANNAFNNQLLLVTLSEQQVDELFQQVAAQPGIGFTVDLESQQVQAGDNIYPFAIDPFRRHCLLNGLDAIGLTLQHDADISAWERQQPSFLR.

It belongs to the LeuD family. LeuD type 1 subfamily. In terms of assembly, heterodimer of LeuC and LeuD.

The catalysed reaction is (2R,3S)-3-isopropylmalate = (2S)-2-isopropylmalate. It participates in amino-acid biosynthesis; L-leucine biosynthesis; L-leucine from 3-methyl-2-oxobutanoate: step 2/4. In terms of biological role, catalyzes the isomerization between 2-isopropylmalate and 3-isopropylmalate, via the formation of 2-isopropylmaleate. The sequence is that of 3-isopropylmalate dehydratase small subunit from Erwinia tasmaniensis (strain DSM 17950 / CFBP 7177 / CIP 109463 / NCPPB 4357 / Et1/99).